A 570-amino-acid chain; its full sequence is Urease subunit alpha (570 aa).

One can recognise a Urease domain in the interval 131–570 (GGMDSHIHFI…LPMAQRYFLF (440 aa)). 3 residues coordinate Ni(2+): histidine 136, histidine 138, and lysine 219. N6-carboxylysine is present on lysine 219. Substrate is bound at residue histidine 221. 2 residues coordinate Ni(2+): histidine 248 and histidine 274. Histidine 322 functions as the Proton donor in the catalytic mechanism. Ni(2+) is bound at residue aspartate 362.

Belongs to the metallo-dependent hydrolases superfamily. Urease alpha subunit family. As to quaternary structure, heterotrimer of UreA (gamma), UreB (beta) and UreC (alpha) subunits. Three heterotrimers associate to form the active enzyme. Ni cation is required as a cofactor. In terms of processing, carboxylation allows a single lysine to coordinate two nickel ions.

The protein resides in the cytoplasm. The catalysed reaction is urea + 2 H2O + H(+) = hydrogencarbonate + 2 NH4(+). Its pathway is nitrogen metabolism; urea degradation; CO(2) and NH(3) from urea (urease route): step 1/1. The sequence is that of Urease subunit alpha from Rhizobium johnstonii (strain DSM 114642 / LMG 32736 / 3841) (Rhizobium leguminosarum bv. viciae).